Reading from the N-terminus, the 1104-residue chain is Lon protease homolog, mitochondrial (1104 aa).

A mitochondrion-targeting transit peptide spans M1–L58. Disordered regions lie at residues A8–A144 and E275–P295. The span at L22 to P46 shows a compositional bias: low complexity. A compositionally biased stretch (basic and acidic residues) spans K80 to K103. The segment covering S104 to S128 has biased composition (low complexity). The span at A129–G139 shows a compositional bias: gly residues. Residues V155–L444 enclose the Lon N-terminal domain. The segment covering A281 to E291 has biased composition (basic and acidic residues). G597 to T604 contributes to the ATP binding site. One can recognise a Lon proteolytic domain in the interval S895–G1082. Catalysis depends on residues S987 and K1030.

The protein belongs to the peptidase S16 family. In terms of assembly, homohexamer or homoheptamer. Organized in a ring with a central cavity.

Its subcellular location is the mitochondrion matrix. It catalyses the reaction Hydrolysis of proteins in presence of ATP.. Functionally, ATP-dependent serine protease that mediates the selective degradation of misfolded, unassembled or oxidatively damaged polypeptides as well as certain short-lived regulatory proteins in the mitochondrial matrix. May also have a chaperone function in the assembly of inner membrane protein complexes. Participates in the regulation of mitochondrial gene expression and in the maintenance of the integrity of the mitochondrial genome. Binds to mitochondrial DNA in a site-specific manner. The protein is Lon protease homolog, mitochondrial of Cryptococcus neoformans var. neoformans serotype D (strain JEC21 / ATCC MYA-565) (Filobasidiella neoformans).